Here is a 210-residue protein sequence, read N- to C-terminus: Cytochrome c4 (210 aa).

A signal peptide spans 1–20 (MNKALVTLLLTLGITGLAHA). Heme c is bound by residues C34, C37, H38, M86, C139, C142, H143, and M187.

In terms of processing, binds 2 heme c groups covalently per subunit.

It localises to the periplasm. Functionally, diheme, high potential cytochrome c believed to be an intermediate electron donor to terminal oxidation systems. The sequence is that of Cytochrome c4 (cycA) from Azotobacter vinelandii.